Reading from the N-terminus, the 893-residue chain is UPF0182 protein CLI_0022 (893 aa).

Helical transmembrane passes span 9 to 29 (IPLF…NFII), 49 to 69 (AIII…WMYY), 94 to 114 (LFFI…SSSY), 154 to 174 (VIIS…FILE), 202 to 222 (LAIV…IKIW), 246 to 266 (FYKI…LSIV), and 273 to 293 (VSIC…ASFL).

Belongs to the UPF0182 family.

The protein resides in the cell membrane. This Clostridium botulinum (strain Langeland / NCTC 10281 / Type F) protein is UPF0182 protein CLI_0022.